The chain runs to 274 residues: MIRLHLHLLSDSTGETLENIAKAGLAQFEGVETIKHFWPMVRSQGHLDRILLEIAQRPGLVIFTLVNNDIRTRLESRCHALGLPSVSALDPVIDALSQLLGQQALARPGRQHILDAAYYARVEAIQYTIAHDDGIASEDWEEADIVLTGVSRSSKTPTSIYLANRGYKVANVPLVVESPPPPSFYSLVHPLIVGLTTSPERLVQIRRNRLLSLNQSPETAYVDHERVAAELSFARRIFSDHGWPVIDVTRRSIEETAAAIINLVNERSAKEEAK.

ADP is bound at residue 149–156; it reads GVSRSSKT.

It belongs to the pyruvate, phosphate/water dikinase regulatory protein family. PDRP subfamily.

It catalyses the reaction N(tele)-phospho-L-histidyl/L-threonyl-[pyruvate, phosphate dikinase] + ADP = N(tele)-phospho-L-histidyl/O-phospho-L-threonyl-[pyruvate, phosphate dikinase] + AMP + H(+). The enzyme catalyses N(tele)-phospho-L-histidyl/O-phospho-L-threonyl-[pyruvate, phosphate dikinase] + phosphate + H(+) = N(tele)-phospho-L-histidyl/L-threonyl-[pyruvate, phosphate dikinase] + diphosphate. Its function is as follows. Bifunctional serine/threonine kinase and phosphorylase involved in the regulation of the pyruvate, phosphate dikinase (PPDK) by catalyzing its phosphorylation/dephosphorylation. The chain is Putative pyruvate, phosphate dikinase regulatory protein from Rhizorhabdus wittichii (strain DSM 6014 / CCUG 31198 / JCM 15750 / NBRC 105917 / EY 4224 / RW1) (Sphingomonas wittichii).